We begin with the raw amino-acid sequence, 405 residues long: Aspartokinase (405 aa).

An ATP-binding site is contributed by 7–10; sequence KYGG. 25 to 30 is a binding site for substrate; the sequence is RIAHYR. ATP is bound at residue Ser41. Substrate-binding positions include 47–49, Glu74, 125–126, 150–153, and Ser153; these read TDE, LE, and RGGS. Residues 173–174, 179–184, and Arg209 contribute to the ATP site; these read TD and YTTDPH. ACT domains follow at residues 263 to 342 and 344 to 405; these read IGLI…IAKV and IVGV…LDKA. Substrate contacts are provided by residues Asp270, 288–290, Gln294, 355–356, 369–370, and 376–377; these read AVD, VP, NI, and SE.

Belongs to the aspartokinase family. Tetramer consisting of 2 isoforms Alpha (catalytic and regulation) and of a homodimer of 2 isoforms Beta (regulation).

It catalyses the reaction L-aspartate + ATP = 4-phospho-L-aspartate + ADP. Its pathway is amino-acid biosynthesis; L-lysine biosynthesis via DAP pathway; (S)-tetrahydrodipicolinate from L-aspartate: step 1/4. It participates in amino-acid biosynthesis; L-methionine biosynthesis via de novo pathway; L-homoserine from L-aspartate: step 1/3. The protein operates within amino-acid biosynthesis; L-threonine biosynthesis; L-threonine from L-aspartate: step 1/5. Functionally, catalyzes the phosphorylation of the beta-carboxyl group of aspartic acid with ATP to yield 4-phospho-L-aspartate, which is involved in the branched biosynthetic pathway leading to the biosynthesis of amino acids lysine, threonine, isoleucine and methionine. This chain is Aspartokinase (ask), found in Thermus thermophilus (strain ATCC BAA-163 / DSM 7039 / HB27).